The following is a 141-amino-acid chain: Nuclear transcription factor Y subunit B-1 (141 aa).

The interval 1-23 is disordered; sequence MADTPSSPAGDGGESGGSVREQD. Alanine 2 is subject to N-acetylalanine. Residues 26 to 32 mediate DNA binding; the sequence is LPIANIS. The interval 53–64 is subunit association domain (SAD); sequence VQECVSEFISFI. The tract at residues 114-141 is disordered; the sequence is DNKGSGKSGDGSNRDAGGGVSGEEMPSW.

It belongs to the NFYB/HAP3 subunit family. In terms of assembly, heterotrimeric transcription factor composed of three components, NF-YA, NF-YB and NF-YC. NF-YB and NF-YC must interact and dimerize for NF-YA association and DNA binding. Binds directly with DPB3-1. As to expression, ubiquitous. Predominantly expressed in leaves, flowers and siliques.

It localises to the nucleus. Functionally, component of the NF-Y/HAP transcription factor complex. The NF-Y complex stimulates the transcription of various genes by recognizing and binding to a CCAAT motif in promoters. This chain is Nuclear transcription factor Y subunit B-1, found in Arabidopsis thaliana (Mouse-ear cress).